The sequence spans 512 residues: 2,3-bisphosphoglycerate-independent phosphoglycerate mutase (512 aa).

Residues D11 and S61 each coordinate Mn(2+). S61 serves as the catalytic Phosphoserine intermediate. Residues H122, 152 to 153 (RD), R184, R190, 259 to 262 (RADR), and K332 each bind substrate. 5 residues coordinate Mn(2+): D399, H403, D440, H441, and H459.

This sequence belongs to the BPG-independent phosphoglycerate mutase family. As to quaternary structure, monomer. Mn(2+) is required as a cofactor.

It catalyses the reaction (2R)-2-phosphoglycerate = (2R)-3-phosphoglycerate. It participates in carbohydrate degradation; glycolysis; pyruvate from D-glyceraldehyde 3-phosphate: step 3/5. In terms of biological role, catalyzes the interconversion of 2-phosphoglycerate and 3-phosphoglycerate. The sequence is that of 2,3-bisphosphoglycerate-independent phosphoglycerate mutase from Francisella tularensis subsp. tularensis (strain FSC 198).